Reading from the N-terminus, the 253-residue chain is Shikimate dehydrogenase (NADP(+)) (253 aa).

Shikimate is bound by residues 13-15 and T59; that span reads SIS. K63 (proton acceptor) is an active-site residue. Position 74 (E74) interacts with NADP(+). Residues N83 and D94 each contribute to the shikimate site. NADP(+)-binding positions include 115-119, 139-144, and V199; these read GAGGA and NRTIER. Y201 is a binding site for shikimate. NADP(+) is bound at residue G221.

Belongs to the shikimate dehydrogenase family. As to quaternary structure, homodimer.

The enzyme catalyses shikimate + NADP(+) = 3-dehydroshikimate + NADPH + H(+). It functions in the pathway metabolic intermediate biosynthesis; chorismate biosynthesis; chorismate from D-erythrose 4-phosphate and phosphoenolpyruvate: step 4/7. Involved in the biosynthesis of the chorismate, which leads to the biosynthesis of aromatic amino acids. Catalyzes the reversible NADPH linked reduction of 3-dehydroshikimate (DHSA) to yield shikimate (SA). This is Shikimate dehydrogenase (NADP(+)) from Thermotoga maritima (strain ATCC 43589 / DSM 3109 / JCM 10099 / NBRC 100826 / MSB8).